The following is a 646-amino-acid chain: Type I inositol polyphosphate 5-phosphatase 2 (646 aa).

Residues 59 to 74 show a composition bias toward basic and acidic residues; that stretch reads TDEDSHNGRRGSEADH. 3 disordered regions span residues 59–99, 185–207, and 329–369; these read TDED…GKSE, ESVY…SAPS, and IDNR…IRNS. The span at 188–207 shows a compositional bias: polar residues; sequence YDQSPSCNNNALHRSHSAPS. Positions 341-350 are enriched in basic and acidic residues; that stretch reads EAAKIMHDDS. Catalytic stretches follow at residues 495–510 and 575–590; these read DQVF…LNMS and KKRA…WLGK.

It belongs to the inositol polyphosphate 5-phosphatase family. Expressed ubiquitously.

The enzyme catalyses 1D-myo-inositol 1,4,5-trisphosphate + H2O = 1D-myo-inositol 1,4-bisphosphate + phosphate. It catalyses the reaction 1D-myo-inositol 1,3,4,5-tetrakisphosphate + H2O = 1D-myo-inositol 1,3,4-trisphosphate + phosphate. Functionally, has phosphatase activity toward Ins(1,4,5)P3 and Ins(1,3,4,5)P4. Seems to be involved in the abscisic acid (ABA) signaling pathway. Could also be able to hydrolyze PtdIns(4,5)P2 and PtdIns(3,4,5)P3. The sequence is that of Type I inositol polyphosphate 5-phosphatase 2 from Arabidopsis thaliana (Mouse-ear cress).